Here is a 330-residue protein sequence, read N- to C-terminus: Protein RfbI (330 aa).

The region spanning H3 to L89 is the 2Fe-2S ferredoxin-type domain. Residues C37, C42, and C45 each coordinate [2Fe-2S] cluster. The FAD-binding FR-type domain occupies K94–R192.

[2Fe-2S] cluster serves as cofactor.

Its pathway is bacterial outer membrane biogenesis; LPS O-antigen biosynthesis. The sequence is that of Protein RfbI (rfbI) from Salmonella typhimurium (strain LT2 / SGSC1412 / ATCC 700720).